A 422-amino-acid chain; its full sequence is Dihydrolipoyllysine-residue succinyltransferase component of 2-oxoglutarate dehydrogenase complex (422 aa).

The 76-residue stretch at 1–76 (MPEVKVPELA…EVGQAIAVIG (76 aa)) folds into the Lipoyl-binding domain. Lys-42 is modified (N6-lipoyllysine). The tract at residues 77 to 184 (EGSGNASKEN…APAKEEKKYN (108 aa)) is disordered. Polar residues-rich tracts occupy residues 80–94 (GNASKENSNDNTPQQ) and 114–130 (EVNQTNDYNQQRVNATP). A Peripheral subunit-binding (PSBD) domain is found at 127–163 (NATPSARRYARENGVNLAEVSPKTNDVVRKEDIDKKQ). The span at 152-163 (DVVRKEDIDKKQ) shows a compositional bias: basic and acidic residues. Residues 164 to 176 (QAPASTQTTQQAP) show a composition bias toward low complexity. Residues His-393 and Asp-397 contribute to the active site.

This sequence belongs to the 2-oxoacid dehydrogenase family. As to quaternary structure, forms a 24-polypeptide structural core with octahedral symmetry. Part of the 2-oxoglutarate dehydrogenase (OGDH) complex composed of E1 (2-oxoglutarate dehydrogenase), E2 (dihydrolipoamide succinyltransferase) and E3 (dihydrolipoamide dehydrogenase); the complex contains multiple copies of the three enzymatic components (E1, E2 and E3). The cofactor is (R)-lipoate.

The catalysed reaction is N(6)-[(R)-dihydrolipoyl]-L-lysyl-[protein] + succinyl-CoA = N(6)-[(R)-S(8)-succinyldihydrolipoyl]-L-lysyl-[protein] + CoA. It functions in the pathway amino-acid degradation; L-lysine degradation via saccharopine pathway; glutaryl-CoA from L-lysine: step 6/6. E2 component of the 2-oxoglutarate dehydrogenase (OGDH) complex which catalyzes the second step in the conversion of 2-oxoglutarate to succinyl-CoA and CO(2). The protein is Dihydrolipoyllysine-residue succinyltransferase component of 2-oxoglutarate dehydrogenase complex (odhB) of Staphylococcus aureus (strain bovine RF122 / ET3-1).